Consider the following 342-residue polypeptide: Farnesyl pyrophosphate synthase 2 (342 aa).

Lysine 47, arginine 50, and glutamine 86 together coordinate isopentenyl diphosphate. Residues aspartate 93 and aspartate 97 each contribute to the Mg(2+) site. Position 102 (arginine 102) interacts with dimethylallyl diphosphate. Arginine 103 serves as a coordination point for isopentenyl diphosphate. Residues lysine 190, threonine 191, glutamine 229, lysine 246, and lysine 255 each coordinate dimethylallyl diphosphate.

This sequence belongs to the FPP/GGPP synthase family. The cofactor is Mg(2+).

It localises to the cytoplasm. The enzyme catalyses isopentenyl diphosphate + dimethylallyl diphosphate = (2E)-geranyl diphosphate + diphosphate. It catalyses the reaction isopentenyl diphosphate + (2E)-geranyl diphosphate = (2E,6E)-farnesyl diphosphate + diphosphate. Its pathway is isoprenoid biosynthesis; farnesyl diphosphate biosynthesis; farnesyl diphosphate from geranyl diphosphate and isopentenyl diphosphate: step 1/1. The protein operates within isoprenoid biosynthesis; geranyl diphosphate biosynthesis; geranyl diphosphate from dimethylallyl diphosphate and isopentenyl diphosphate: step 1/1. Catalyzes the sequential condensation of isopentenyl pyrophosphate with the allylic pyrophosphates, dimethylallyl pyrophosphate, and then with the resultant geranylpyrophosphate to the ultimate product farnesyl pyrophosphate. The sequence is that of Farnesyl pyrophosphate synthase 2 (FPS2) from Arabidopsis thaliana (Mouse-ear cress).